The chain runs to 500 residues: Polyamine oxidase 1 (500 aa).

The N-terminal stretch at 1-28 is a signal peptide; the sequence is MSSSPSFGLLAVAALLLALSLAQHGSLA. Residues 42 to 43, E63, R71, and 87 to 88 each bind FAD; these read MS and NW. Residue E90 participates in substrate binding. An N-linked (GlcNAc...) asparagine glycan is attached at N105. E198 contributes to the substrate binding site. FAD contacts are provided by V265, Y427, and E458. G466 serves as a coordination point for substrate. FAD is bound at residue 467-468; that stretch reads YV. Cysteines 485 and 491 form a disulfide.

This sequence belongs to the flavin monoamine oxidase family. As to quaternary structure, monomer. FAD is required as a cofactor.

It localises to the secreted. The protein resides in the extracellular space. It is found in the apoplast. The protein localises to the cell wall. The enzyme catalyses spermidine + O2 + H2O = 4-aminobutanal + propane-1,3-diamine + H2O2. The catalysed reaction is N(8)-acetylspermidine + O2 + H2O = 4-acetamidobutanal + propane-1,3-diamine + H2O2. It catalyses the reaction spermine + O2 + H2O = N-(3-aminopropyl)-4-aminobutanal + propane-1,3-diamine + H2O2. It carries out the reaction N(1)-acetylspermine + O2 + H2O = N-(3-acetamidopropyl)-4-aminobutanal + propane-1,3-diamine + H2O2. It participates in amine and polyamine degradation; spermine degradation. Flavoenzyme involved in polyamine back-conversion. Catalyzes the oxidation of the secondary amino group of polyamines, such as spermine, spermidine and their acetyl derivatives. Plays an important role in the regulation of polyamine intracellular concentration. This chain is Polyamine oxidase 1, found in Zea mays (Maize).